The sequence spans 26 residues: Toxin b subunit alpha (26 aa).

Toxin b is a heterodimer composed of toxin alpha and toxin beta. In terms of tissue distribution, expressed by the venom gland.

Its subcellular location is the secreted. Functionally, binds to sodium channels (Nav) and affects the channel activation process. This Androctonus crassicauda (Arabian fat-tailed scorpion) protein is Toxin b subunit alpha.